Reading from the N-terminus, the 434-residue chain is dTDP-D-glucose 4,6-dehydratase (434 aa).

Position 134 (Thr-134) interacts with substrate. Catalysis depends on Asp-135, which acts as the Proton donor. Catalysis depends on proton acceptor residues Glu-136 and Tyr-169. The span at 286–309 shows a compositional bias: low complexity; the sequence is NNNNNNNNNNNNNNNNNNNNNNNN. Residues 286–310 form a disordered region; it reads NNNNNNNNNNNNNNNNNNNNNNNND.

The protein belongs to the NAD(P)-dependent epimerase/dehydratase family. dTDP-glucose dehydratase subfamily. Requires NAD(+) as cofactor.

The enzyme catalyses dTDP-alpha-D-glucose = dTDP-4-dehydro-6-deoxy-alpha-D-glucose + H2O. This chain is dTDP-D-glucose 4,6-dehydratase (tgds), found in Dictyostelium discoideum (Social amoeba).